Consider the following 414-residue polypeptide: Glyco-Gag protein (414 aa).

The Cytoplasmic portion of the chain corresponds to 1 to 51; that stretch reads MSGASSGTAIGAHLFGVSPECRVLIGDEGAGPSKSLSEVSFSVWYQSRAAR. Residues 52 to 72 form a helical membrane-spanning segment; sequence LVIFCLVASFLVPCLTFLIAE. Residues 73–414 are Extracellular-facing; it reads TVMGQTIATP…TNLAQVKQVV (342 aa). Asn-134 carries an N-linked (GlcNAc...) asparagine; by host glycan. The interval 171-282 is disordered; the sequence is VRPFLPPPKP…LREGPNNRPQ (112 aa). Residues 174 to 193 are compositionally biased toward pro residues; it reads FLPPPKPPTPLPQPLSPQPS. A compositionally biased stretch (low complexity) spans 194 to 206; it reads APLTSSLYPVLPK. The segment covering 210–220 has biased composition (pro residues); the sequence is PKPPVLPPDPS.

Post-translationally, glycosylated by host. In terms of processing, cleaved by host near the middle of the molecule, releasing the c-terminal half containing capsid and nucleoprotein domains op GAG.

The protein resides in the host cell membrane. Functionally, plays a role in viral particle release. Presumably acts by facilitating the fission of the virion bud at the cell surface. The protein is Glyco-Gag protein of Felidae (cat family).